The sequence spans 178 residues: Aspartate carbamoyltransferase regulatory chain (178 aa).

Residues 1–15 (MNDREPNQKESKESV) show a composition bias toward basic and acidic residues. Residues 1–23 (MNDREPNQKESKESVNDAVPRAR) are disordered. Zn(2+)-binding residues include C133, C138, C159, and C162.

It belongs to the PyrI family. In terms of assembly, contains catalytic and regulatory chains. Zn(2+) is required as a cofactor.

Involved in allosteric regulation of aspartate carbamoyltransferase. In Haloquadratum walsbyi (strain DSM 16790 / HBSQ001), this protein is Aspartate carbamoyltransferase regulatory chain.